The primary structure comprises 282 residues: F-box protein VBF (282 aa).

The region spanning 1-44 is the F-box domain; sequence MMMLPEACIANILAFTSPADAFSSSEVSSVFRLAGDSDFVWEKF.

In terms of assembly, component of SCF(VBF) E3 ubiquitin ligase complex that interacts with VIP1. Interacts directly with SKP1A and VIP1. Forms a complex composed of VIP1, VBF and Agrobacterium virE2.

Its function is as follows. Component of SCF(VBF) E3 ubiquitin ligase complexes, which mediate the ubiquitination and subsequent proteasomal degradation of target proteins such as VIP1 and Agrobacterium virE2, after their implication in T-DNA translocation to the host nucleus (can functionally replace Agrobacterium VirF). Required during Agrobacterium-induced tumor formation. In Arabidopsis thaliana (Mouse-ear cress), this protein is F-box protein VBF (VBF).